The primary structure comprises 529 residues: CRISPR-associated endodeoxyribonuclease Cas12f1 (529 aa).

A zinc finger domain (ZF) region spans residues 1–95; sequence MAKNTITKTL…RGQFPDAVFW (95 aa). Zn(2+) contacts are provided by cysteine 50, histidine 53, cysteine 69, and cysteine 72. Positions 96–192 are recognition domain (REC); the sequence is QEISEIFRQL…PTTKSDNFPI (97 aa). The interval 193 to 312 is wedge domain (WED); it reads PLVKQKGGQY…MLNLSIDVPK (120 aa). The segment at 313–321 is linker; sequence IDKGVDPSI. Residues 322–473 are ruvC-I; that stretch reads IGGIDVGVKS…RKVAPNNTSK (152 aa). Catalysis depends on residues aspartate 326 and glutamate 422. The target nucleic acid-binding (TNB) stretch occupies residues 474 to 508; that stretch reads TCSKCGHLNNYFNFEYRKKNKFPHFKCEKCNFKEN. The Zn(2+) site is built by cysteine 475 and cysteine 478. The active site involves arginine 490. The Zn(2+) site is built by cysteine 500 and cysteine 503. The tract at residues 509 to 529 is ruvC-II; it reads ADYNAALNISNPKLKSTKEEP. The active site involves aspartate 510.

This sequence belongs to the CRISPR-associated endonuclease Cas12f family. An asymmetric homodimer. Guide RNA is probably required for dimerization. Mg(2+) serves as cofactor. The cofactor is Zn(2+).

With respect to regulation, target ssDNA cleavage is inhibited by EDTA. Activity is maximal with 5-50 mM NaCl, is less efficient at higher NaCl concentrations. CRISPR (clustered regularly interspaced short palindromic repeat), is an adaptive immune system that provides protection against mobile genetic elements (viruses, transposable elements and conjugative plasmids). CRISPR clusters contain sequences complementary to antecedent mobile elements and target invading nucleic acids. CRISPR clusters are transcribed and processed into CRISPR RNA (crRNA), which requires a trans-encoded small RNA (tracrRNA), but not this protein (in vitro). Upon expression in E.coli of this protein, a mini CRISPR array and the probable tracrRNA, the protein associates with both RNAs. The mini system is not active in E.coli against phiX174 phage, nor is it active in protection against transformation by foreign plasmids. In vitro the purified protein-tracrRNA-crRNA complex cleaves ssDNA complementary to the crRNA; target cleavage requires both tracrRNA and crRNA, but not a protospacer adjacent motif (PAM). The tracrRNA-crRNA can be replaced by a single guide RNA (sgRNA). 2-nucleotide mismatches in the middle of the crRNA:DNA heteroduplex decrease cleavage. Cleavage occurs just downstream of the heteroduplex. Activation of this protein results in non-specific ssDNA degradation in vitro. In vitro and in E.coli (coexpressed with sgRNA) has dsDNA endonuclease activity, recognizing the 5' PAM sequence TTTR; both sgRNA and a PAM are required for activity. Cleaves the target strand 24 and the nontarget strand 22 bases upstream of the PAM (respectively), resulting in 5' overhangs. The 2 monomers interact differently with the sgRNA and target DNA. Mutagenesis of a dimeric construct shows that one of the RuvC monomers probably cleaves both DNA strands. The sequence is that of CRISPR-associated endodeoxyribonuclease Cas12f1 from Uncultured archaeon.